Reading from the N-terminus, the 477-residue chain is Sulfate adenylyltransferase subunit 1 (477 aa).

Positions 22–239 constitute a tr-type G domain; it reads KDMLRFITCG…TVQISHDAPL (218 aa). Residues 31-38 form a G1 region; the sequence is GSVDDGKS. Residue 31 to 38 coordinates GTP; the sequence is GSVDDGKS. A G2 region spans residues 89-93; it reads GITID. Residues 110-113 are G3; sequence DCPG. Residues 110–114 and 165–168 contribute to the GTP site; these read DCPGH and NKMD. The tract at residues 165-168 is G4; the sequence is NKMD. Positions 202-204 are G5; it reads SAL.

This sequence belongs to the TRAFAC class translation factor GTPase superfamily. Classic translation factor GTPase family. CysN/NodQ subfamily. Heterodimer composed of CysD, the smaller subunit, and CysN.

It carries out the reaction sulfate + ATP + H(+) = adenosine 5'-phosphosulfate + diphosphate. The protein operates within sulfur metabolism; hydrogen sulfide biosynthesis; sulfite from sulfate: step 1/3. With CysD forms the ATP sulfurylase (ATPS) that catalyzes the adenylation of sulfate producing adenosine 5'-phosphosulfate (APS) and diphosphate, the first enzymatic step in sulfur assimilation pathway. APS synthesis involves the formation of a high-energy phosphoric-sulfuric acid anhydride bond driven by GTP hydrolysis by CysN coupled to ATP hydrolysis by CysD. This Chromobacterium violaceum (strain ATCC 12472 / DSM 30191 / JCM 1249 / CCUG 213 / NBRC 12614 / NCIMB 9131 / NCTC 9757 / MK) protein is Sulfate adenylyltransferase subunit 1.